The chain runs to 946 residues: Ent-kaur-16-ene synthase (946 aa).

Positions 656, 660, 839, 840, 843, and 847 each coordinate Mg(2+). Residues 656 to 660 carry the DEXXE motif motif; the sequence is DEFFE.

The protein belongs to the terpene synthase family. The cofactor is Mg(2+).

It carries out the reaction ent-copalyl diphosphate = ent-kaur-16-ene + diphosphate. It catalyses the reaction (2E,6E,10E)-geranylgeranyl diphosphate = ent-copalyl diphosphate. It participates in plant hormone biosynthesis; gibberellin biosynthesis. Catalyzes the conversion of geranylgeranyl diphosphate to the gibberellin precursor ent-kaurene diphosphate in a two step process. The chain is Ent-kaur-16-ene synthase from Phaeosphaeria sp. (strain L487).